Consider the following 216-residue polypeptide: Enolase-phosphatase E1 (216 aa).

Residues Asp-8 and Glu-10 each contribute to the Mg(2+) site. Substrate contacts are provided by residues 115–116 (SS) and Lys-149. Residue Asp-172 participates in Mg(2+) binding.

The protein belongs to the HAD-like hydrolase superfamily. MasA/MtnC family. Monomer. Requires Mg(2+) as cofactor.

It is found in the cytoplasm. The protein resides in the nucleus. It carries out the reaction 5-methylsulfanyl-2,3-dioxopentyl phosphate + H2O = 1,2-dihydroxy-5-(methylsulfanyl)pent-1-en-3-one + phosphate. The protein operates within amino-acid biosynthesis; L-methionine biosynthesis via salvage pathway; L-methionine from S-methyl-5-thio-alpha-D-ribose 1-phosphate: step 3/6. Its pathway is amino-acid biosynthesis; L-methionine biosynthesis via salvage pathway; L-methionine from S-methyl-5-thio-alpha-D-ribose 1-phosphate: step 4/6. Bifunctional enzyme that catalyzes the enolization of 2,3-diketo-5-methylthiopentyl-1-phosphate (DK-MTP-1-P) into the intermediate 2-hydroxy-3-keto-5-methylthiopentenyl-1-phosphate (HK-MTPenyl-1-P), which is then dephosphorylated to form the acireductone 1,2-dihydroxy-3-keto-5-methylthiopentene (DHK-MTPene). This is Enolase-phosphatase E1 (utr4) from Schizosaccharomyces pombe (strain 972 / ATCC 24843) (Fission yeast).